Consider the following 853-residue polypeptide: Cytochrome P450 monooxygenase mpaDE' (853 aa).

The Lumenal segment spans residues 1–6; it reads MESLSL. Residues 7-29 traverse the membrane as a helical segment; that stretch reads TWITAIAVVLYLVQRYVRSYWRL. Topologically, residues 30–853 are cytoplasmic; that stretch reads KDIPGPVLAK…DIENAIEGQK (824 aa). C449 contacts heme.

Belongs to the cytochrome P450 family. Heme is required as a cofactor.

It localises to the endoplasmic reticulum membrane. The catalysed reaction is 5-methylorsellinate + reduced [NADPH--hemoprotein reductase] + O2 = 4,6-dihydroxy-2-(hydroxymethyl)-3-methylbenzoate + oxidized [NADPH--hemoprotein reductase] + H2O + H(+). The enzyme catalyses 4,6-dihydroxy-2-(hydroxymethyl)-3-methylbenzoate + H(+) = 5,7-dihydroxy-4-methylphthalide + H2O. It functions in the pathway secondary metabolite biosynthesis; terpenoid biosynthesis. Its function is as follows. Cytochrome P450 monooxygenase; part of the gene cluster that mediates the biosynthesis of mycophenolic acid (MPA), the first isolated antibiotic natural product in the world obtained from a culture of Penicillium brevicompactum in 1893. MpaDE' is an endoplasmic reticulum-bound enzyme that catalyzes the conversion of 5-methylorsellinic acid (5MOA) into the phthalide compound 5,7-dihydroxy-4,6-dimethylphthalide (DHMP). MpaDE' first catalyzes hydroxylation of 5-MOA to 4,6-dihydroxy-2-(hydroxymethyl)-3-methylbenzoic acid (DHMB), and then acts as a lactone synthase that catalyzes the ring closure to convert DHMB into DHMP. The first step of the pathway is the synthesis of 5-methylorsellinic acid (5MOA) by the cytosolic polyketide synthase mpaC. 5MOA is then converted to the phthalide compound 5,7-dihydroxy-4,6-dimethylphthalide (DHMP) by the endoplasmic reticulum-bound cytochrome P450 monooxygenase mpaDE. MpaDE first catalyzes hydroxylation of 5-MOA to 4,6-dihydroxy-2-(hydroxymethyl)-3-methylbenzoic acid (DHMB). MpaDE then acts as a lactone synthase that catalyzes the ring closure to convert DHMB into DHMP. The next step is the prenylation of DHMP by the Golgi apparatus-associated prenyltransferase mpaA to yield farnesyl-DHMP (FDHMP). The ER-bound oxygenase mpaB then mediates the oxidative cleavage the C19-C20 double bond in FDHMP to yield FDHMP-3C via a mycophenolic aldehyde intermediate. The O-methyltransferase mpaG catalyzes the methylation of FDHMP-3C to yield MFDHMP-3C. After the cytosolic methylation of FDHMP-3C, MFDHMP-3C enters into peroxisomes probably via free diffusion due to its low molecular weight. Upon a peroxisomal CoA ligation reaction, catalyzed by a beta-oxidation component enzyme acyl-CoA ligase ACL891, MFDHMP-3C-CoA would then be restricted to peroxisomes for the following beta-oxidation pathway steps. The peroxisomal beta-oxidation machinery than converts MFDHMP-3C-CoA into MPA_CoA, via a beta-oxidation chain-shortening process. Finally mpaH acts as a peroxisomal acyl-CoA hydrolase with high substrate specificity toward MPA-CoA to release the final product MPA. The protein is Cytochrome P450 monooxygenase mpaDE' of Penicillium brevicompactum.